We begin with the raw amino-acid sequence, 460 residues long: MTAGKLWGGRFRERTAGLVEEYTESVSYDRALYAQDIAGSKAHARMLARQGVISAGDAGRITEGLEQIRKEIESGEFVWRTEMEDVHMNIESRLTELVGDAGRRLHTGRSRNDQVALDFRLFVSDRIRVWKNLVRGVIAALTAQAHEHKDTLLPGCTHLQAAQPVSLAQHLLAYAWMLRRDYDRLEDCDRRVRICPLGAAALAGTTYPLDPQSVAAELDMYGVFNNSMDAVSDRDFALEAQFCGSLIMAHMSRLCEEIILWANPNFGYIFLPDAYATGSSIMPQKKNPDVAEIMRGKTGRVYGGLMSLLTTLKGLPMTYNRDLQEDKEPFIDTDRTVSASLEIMAGMVEALRFNTRRMENALRAGFLNATELADYLVGKGVPFRDAHHITGNAVALAEDRGKGLEDLTLEEFHSVSDLIGEDVFAVLDYRAAVERRCTHGGTGPASVAAQLAALQQWLSS.

It belongs to the lyase 1 family. Argininosuccinate lyase subfamily.

Its subcellular location is the cytoplasm. It catalyses the reaction 2-(N(omega)-L-arginino)succinate = fumarate + L-arginine. It functions in the pathway amino-acid biosynthesis; L-arginine biosynthesis; L-arginine from L-ornithine and carbamoyl phosphate: step 3/3. In Oleidesulfovibrio alaskensis (strain ATCC BAA-1058 / DSM 17464 / G20) (Desulfovibrio alaskensis), this protein is Argininosuccinate lyase.